A 632-amino-acid polypeptide reads, in one-letter code: MQREEGFNTKMADGPDEYETETGCVPLLHPEEIKPQSHYNHGYGEPLGRKTHIDDYSTWDIVKATQYGIYERCRELVEAGYDVRQPDKENVTLLHWAAINNRIDLVKYYISKGAIVDQLGGDLNSTPLHWATRQGHLSMVVQLMKYGADPSLIDGEGCSCIHLAAQFGHTSIVAYLIAKGQDVDMMDQNGMTPLMWAAYRTHSVDPTRLLLTFNVSVNLGDKYHKNTALHWAVLAGNTTVISLLLEAGGNVDAQNVKGESALDLAKQRKNVWMINHLQEARQAKGYDNPSFLRKLKADKEFRQKVMLGTPFLVIWLVGFIADLDIDSWLIKGLMYGGVWATVQFLSKSFFDHSMHSALPLGIYLATKFWMYVTWFFWFWNDLNFLFIHLPFLANSVALFYNFGKSWKSDPGIIKATEEQKKKTIVELAETGSLDLSIFCSTCLIRKPVRSKHCGVCNRCIAKFDHHCPWVGNCVGAGNHRYFMGYLFFLLFMICWMIYGCVSYWGLHCETTYTKDGFWTYITQIATCSPWMFWMFLNSVFHFLWVAVLLMCQLYQITCLGITTNERMNARRYKHFKVTTTSIESPFNHGCVRNIIDFFEFRCCGLFRPVIVDWTRQYTIEYDQISGSGYQLV.

The Cytoplasmic portion of the chain corresponds to M1–K304. A necessary and sufficient for interaction with DNAJC5 and SNAP25 region spans residues M11–V305. 7 ANK repeats span residues T51–P86, E89–Q118, L123–L152, E156–M185, N189–L219, H224–A253, and K257–Y286. 2 helical membrane-spanning segments follow: residues V305–I325 and D326–S346. At K347 to A357 the chain is on the cytoplasmic side. A helical membrane pass occupies residues L358 to F378. Topologically, residues W379 to D381 are lumenal. A helical membrane pass occupies residues L382–F402. The Cytoplasmic segment spans residues G403–R480. The DHHC domain maps to I437 to F487. The active-site S-palmitoyl cysteine intermediate is C467. The helical transmembrane segment at Y481–V501 threads the bilayer. The Lumenal portion of the chain corresponds to S502–P529. A helical transmembrane segment spans residues W530 to M550. At C551–V632 the chain is on the cytoplasmic side.

This sequence belongs to the DHHC palmitoyltransferase family. AKR/ZDHHC17 subfamily. As to quaternary structure, interacts (via ANK repeats) with numerous proteins (via the consensus sequence motif [VIAP]-[VIT]-x-x-Q-P). Interacts (via ANK repeats) with CLIP3. Interacts (via ANK repeats) with HTT. Interacts (via ANK repeats) with DNAJC5 (via C-terminus). Interacts (via ANK repeats) with MAP6. Interacts (via ANK repeats) with SNAP23. Interacts (via ANK repeats) with SNAP25. Interacts (via ANK repeats) with EVL. Interacts with SPRED1 and SPRED3. Interacts with GPM6A and OPTN. May interact (via ANK repeats) with SPRED2. May interact with NTRK1; may regulate its localization and function. Post-translationally, autopalmitoylated. Autopalmitoylation has a regulatory role in ZDHHC17-mediated Mg(2+) transport. As to expression, expressed in liver, testis, kidney, heart, pancreas and brain. Highest expression was seen in the brain. Localized predominantly in the perinuclear regions of neurons from the cortex, striatum and hippocampus. Colocalized with HTT in the medium spiny neurons of the striatum and the spiny neurons that project into the globus pallidus.

It is found in the golgi apparatus membrane. The protein localises to the cytoplasmic vesicle membrane. It localises to the presynaptic cell membrane. It catalyses the reaction L-cysteinyl-[protein] + hexadecanoyl-CoA = S-hexadecanoyl-L-cysteinyl-[protein] + CoA. The catalysed reaction is L-cysteinyl-[protein] + tetradecanoyl-CoA = S-tetradecanoyl-L-cysteinyl-[protein] + CoA. The enzyme catalyses L-cysteinyl-[protein] + octadecanoyl-CoA = S-octadecanoyl-L-cysteinyl-[protein] + CoA. Functionally, palmitoyltransferase that catalyzes the addition of palmitate onto various protein substrates and is involved in a variety of cellular processes. Has no stringent fatty acid selectivity and in addition to palmitate can also transfer onto target proteins myristate from tetradecanoyl-CoA and stearate from octadecanoyl-CoA. Palmitoyltransferase specific for a subset of neuronal proteins, including SNAP25, DLG4/PSD95, GAD2, SYT1 and HTT. Also palmitoylates neuronal protein GPM6A as well as SPRED1 and SPRED3. Could also play a role in axonogenesis through the regulation of NTRK1 and the downstream ERK1/ERK2 signaling cascade. May be involved in the sorting or targeting of critical proteins involved in the initiating events of endocytosis at the plasma membrane. May play a role in Mg(2+) transport. Could also palmitoylate DNAJC5 and regulate its localization to the Golgi membrane. Palmitoylates CASP6, thereby preventing its dimerization and subsequent activation. The chain is Palmitoyltransferase ZDHHC17 from Mus musculus (Mouse).